Consider the following 676-residue polypeptide: MKVQSKAISKPKEHESAIYRNANFPDHLVETYSDDVHTLFDVFRHSVKQFGNKKAMGYRNLVKEHVETKMVTKVVDGEKKEVPKSWSYFELSDYNYLSFNDIYDKALRYAGALRKLGLNKGDKFELYAPTSAFWLLTAEACLSQSMTIVTAYDTLGEEGLLHSLRESGVRGMYTEGHLLKTLVNPLKEIESLEVIIYRNDAKEEDIKTIQEIRPNLKLIKFADFEKMSPPVEPDPPSPEEICCIMYTSGSTGLPKGVILSHKNMVAIVTAIVKHVPEVTSKDYLLAYLPLAHILEFAFENICLAWGGTIGYANVRTLVDTNCRNCKGDINTFRPTIMVGVPAVWEMVRKGIMSKLNAASAVKRSVFWTAYYTKAKLMRHNLPGSCVLDTAVFNKIRSMGTGGRLRYTLSGGSALSPDTKRFLSIVLCPMLIGYGLTEISAAAMVQNPACFNLDDSAGSLLPCTEMKLVDCEEGNYNSHGHPPRGEIWLRGPSLTRGYLNRDKENKESFTPDGWFRTGDVGELTPEGLLRIIDRKKNLVKTQNGEYIALEKLESRYRTSSLVSNICVYADQTKVKPLAIIVPNEPVVRKLATEQAGLSPDASWEEVCHNKKVRQLVYDDLIRIGRSHHFANIELIQNVVLVPIEFTPENGLVTAAQKLQRRKILDRFKKEIDAAYAE.

ATP is bound at residue 246 to 257; sequence YTSGSTGLPKGV. Residues 511-560 carry the FACS motif; it reads DGWFRTGDVGELTPEGLLRIIDRKKNLVKTQNGEYIALEKLESRYRTSSL.

Belongs to the ATP-dependent AMP-binding enzyme family. Mg(2+) serves as cofactor.

The enzyme catalyses a long-chain fatty acid + ATP + CoA = a long-chain fatty acyl-CoA + AMP + diphosphate. Functionally, esterification, concomitant with transport, of exogenous long-chain fatty acids into metabolically active CoA thioesters for subsequent degradation or incorporation into phospholipids. It may supplement intracellular myristoyl-CoA pools from exogenous myristate. Preferentially acts on C12:0-C16:0 fatty acids with myristic and pentadecanic acid (C15:0) having the highest activities. Appears to play a role in the maintenance of cell viability during stationary phase. This is Long-chain-fatty-acid--CoA ligase 1 (lcf1) from Schizosaccharomyces pombe (strain 972 / ATCC 24843) (Fission yeast).